A 399-amino-acid polypeptide reads, in one-letter code: Octopine dehydrogenase (399 aa).

NADH is bound by residues 10-13 (GGNG) and 35-38 (FADE). Gln118 and Thr143 together coordinate pyruvate. Gln118 lines the substrate pocket. Residue Cys148 participates in NAD(+) binding. Met206 serves as a coordination point for L-arginine. Residue His212 participates in pyruvate binding. Residue His212 is part of the active site. Arg324 lines the NAD(+) pocket.

This sequence belongs to the lysopine/nopaline/octopine/opine/vitopine dehydrogenases family.

It catalyses the reaction D-octopine + NAD(+) + H2O = L-arginine + pyruvate + NADH + H(+). Agmatine acts as a competitive inhibitor of the condensation reaction where the L-arginine and agmatine substrates compete for the same site. Functionally, catalyzes the reverse reaction of octopine dehydrogenation. Acts on L-arginine in preference to other substrates such as canavanine, cysteine, L-alanine, ornithine or norvaline, owing to the presence of the positively charged guanidium group. The sequence is that of Octopine dehydrogenase from Pecten maximus (King scallop).